The following is a 542-amino-acid chain: MFS thioclapurine efflux transporter tcpA (542 aa).

Positions 1 to 10 (MATVGTEEKN) are enriched in basic and acidic residues. Residues 1–24 (MATVGTEEKNPIGSASNTAEPNVT) form a disordered region. Residues 13–24 (GSASNTAEPNVT) show a composition bias toward polar residues. Residue N22 is glycosylated (N-linked (GlcNAc...) asparagine). A run of 3 helical transmembrane segments spans residues 32-52 (SGFKLTIIVISLCLSLFLCGL), 75-97 (GWYTTAYLLTTSSFQIAYGKLYT), and 103-123 (MILLMALAIFELGSIICAAAP). N-linked (GlcNAc...) asparagine glycosylation occurs at N124. 6 consecutive transmembrane segments (helical) span residues 133 to 153 (AIAGLGAAGIFPGSTLVLVHA), 161 to 181 (ALLGITTGMFGIASLCGPFIG), 193 to 213 (CFIINVPLGVITAVIVTFFVF), 234 to 254 (IPEILVLVAALVCLVLGLQWG), 265 to 285 (IIALLVVFAVLTTAFLVLQVL), and 307 to 327 (IFALCSSGAMFIAVTYLPIYF). N332 is a glycosylation site (N-linked (GlcNAc...) asparagine). The helical transmembrane segment at 339-359 (GVNVMPLILGFLVMSIISGVI) threads the bilayer. Residue N361 is glycosylated (N-linked (GlcNAc...) asparagine). The next 4 membrane-spanning stretches (helical) occupy residues 370–390 (MFLCTILASVGAGLVSTFDVG), 396–416 (WIGYQALLGFGIGFGLQQPIV), 427–447 (VPFGVAFINMMQMLGGAIFVA), and 500–520 (VLGQVFLIATGLCVGTLLGSL).

The protein belongs to the major facilitator superfamily.

It is found in the cell membrane. In terms of biological role, MFS efflux transporter probably involved in thioclapurine export. This is MFS thioclapurine efflux transporter tcpA from Claviceps purpurea (strain 20.1) (Ergot fungus).